Here is a 403-residue protein sequence, read N- to C-terminus: MRGRRGDRMTINIQEHMAINVCPGPIRPIRQISDYFPRRGPGPEGGGGGRGFGEAPAHLAPLALAPPAALLGATTPDDGAEVDSYDSDDTTALGTLEFDLLYDQASCMLHCRILRAKGLKPMDFNGLADPYVKLHLLPGACKANKLKTKTQRNTLNPVWNEELTYSGITDDDITHKVLRISVCDEDKLSHNEFIGEIRVPLRRLKPSQKKHFNICLERQVPLPSPSSMSAALRGISCYLKELEQAEQGPGLLEERGRILLSLSYSSRRHGLLVGIVRCAHLAAMDVNGYSDPYVKTYLRPDVDKKSKHKTCVKKKTLNPEFNEEFFYEMELSTLATKTLEVTVWDYDIGKSNDFIGGVSLGPGARGEAQKHWRDCLHQPDTAVERWHTLTSELPPAAGALPLA.

Positions 1–92 are interaction with UNC13D and DYNLT1; it reads MRGRRGDRMT…DSYDSDDTTA (92 aa). C2 domains lie at 92–214 and 254–387; these read ALGT…HFNI and ERGR…ERWH. Ca(2+) is bound by residues D123, D129, D184, D186, D285, D291, D345, D347, and D353. Residues 218–403 are interaction with UNC13D; that stretch reads RQVPLPSPSS…PPAAGALPLA (186 aa).

Interacts (via N-terminus) with UNC13A. Interacts with cytoplasmic dynein light chain DYNLT1. Interacts with UNC13D. It depends on Ca(2+) as a cofactor. As to expression, predominantly expressed in brain. Also found in non-neural tissues. Expressed in RBL-2H3 mast cell line.

It is found in the cytoplasmic vesicle. Its subcellular location is the secretory vesicle. The protein resides in the synaptic vesicle membrane. The protein localises to the synapse. It localises to the synaptosome. It is found in the lysosome. Functionally, calcium sensor which most probably regulates fusion of vesicles with membranes. Binds calcium and phospholipids. May be involved in calcium dependent neurotransmitter release through the interaction with UNC13A. May be involved in calcium-dependent spontaneous release of neurotransmitter in absence of action potentials in neuronal cells. Regulates Ca(2+)-dependent secretory lysosome exocytosis in mast cells. The chain is Double C2-like domain-containing protein alpha (Doc2a) from Rattus norvegicus (Rat).